A 261-amino-acid chain; its full sequence is Small ribosomal subunit protein uS2 (261 aa).

It belongs to the universal ribosomal protein uS2 family.

This chain is Small ribosomal subunit protein uS2, found in Rhodospirillum centenum (strain ATCC 51521 / SW).